The primary structure comprises 118 residues: Large ribosomal subunit protein bL20 (118 aa).

Belongs to the bacterial ribosomal protein bL20 family.

In terms of biological role, binds directly to 23S ribosomal RNA and is necessary for the in vitro assembly process of the 50S ribosomal subunit. It is not involved in the protein synthesizing functions of that subunit. This chain is Large ribosomal subunit protein bL20, found in Francisella tularensis subsp. novicida (strain U112).